Reading from the N-terminus, the 70-residue chain is Beta sliding clamp (70 aa).

Belongs to the beta sliding clamp family. As to quaternary structure, forms a ring-shaped head-to-tail homodimer around DNA which binds and tethers DNA polymerases and other proteins to the DNA. The DNA replisome complex has a single clamp-loading complex (3 tau and 1 each of delta, delta', psi and chi subunits) which binds 3 Pol III cores (1 core on the leading strand and 2 on the lagging strand) each with a beta sliding clamp dimer. Additional proteins in the replisome are other copies of gamma, psi and chi, Ssb, DNA helicase and RNA primase.

It is found in the cytoplasm. Functionally, confers DNA tethering and processivity to DNA polymerases and other proteins. Acts as a clamp, forming a ring around DNA (a reaction catalyzed by the clamp-loading complex) which diffuses in an ATP-independent manner freely and bidirectionally along dsDNA. Initially characterized for its ability to contact the catalytic subunit of DNA polymerase III (Pol III), a complex, multichain enzyme responsible for most of the replicative synthesis in bacteria; Pol III exhibits 3'-5' exonuclease proofreading activity. The beta chain is required for initiation of replication as well as for processivity of DNA replication. The chain is Beta sliding clamp (dnaN) from Rhodobacter capsulatus (Rhodopseudomonas capsulata).